The sequence spans 409 residues: Arginine deiminase (409 aa).

Cysteine 399 acts as the Amidino-cysteine intermediate in catalysis.

The protein belongs to the arginine deiminase family.

It is found in the cytoplasm. It catalyses the reaction L-arginine + H2O = L-citrulline + NH4(+). The protein operates within amino-acid degradation; L-arginine degradation via ADI pathway; carbamoyl phosphate from L-arginine: step 1/2. This Borrelia duttonii (strain Ly) protein is Arginine deiminase.